A 257-amino-acid polypeptide reads, in one-letter code: 5'-nucleotidase SurE (257 aa).

Residues Asp-8, Asp-9, Ser-40, and Asn-92 each coordinate a divalent metal cation.

Belongs to the SurE nucleotidase family. Requires a divalent metal cation as cofactor.

It is found in the cytoplasm. The enzyme catalyses a ribonucleoside 5'-phosphate + H2O = a ribonucleoside + phosphate. Functionally, nucleotidase that shows phosphatase activity on nucleoside 5'-monophosphates. The sequence is that of 5'-nucleotidase SurE from Rhizobium leguminosarum bv. trifolii (strain WSM2304).